The sequence spans 328 residues: Acetaldehyde dehydrogenase 3 (328 aa).

17-20 provides a ligand contact to NAD(+); that stretch reads SGNI. C135 serves as the catalytic Acyl-thioester intermediate. NAD(+)-binding positions include 166-174 and N298; that span reads SAGPGTRAN.

The protein belongs to the acetaldehyde dehydrogenase family.

The enzyme catalyses acetaldehyde + NAD(+) + CoA = acetyl-CoA + NADH + H(+). This Nocardia farcinica (strain IFM 10152) protein is Acetaldehyde dehydrogenase 3.